We begin with the raw amino-acid sequence, 255 residues long: F-box only protein 44 (255 aa).

Residues 3 to 50 enclose the F-box domain; that stretch reads VGNINELPENILLELFIHIPARQLLLRCRPVCSLWRDLIDLVTLWKRK. One can recognise an FBA domain in the interval 71 to 252; sequence FYFLRSLQRN…VTNSSITIGP (182 aa).

Part of a SCF (SKP1-cullin-F-box) protein ligase complex. Interacts with SKP1 and CUL1. In terms of tissue distribution, expressed in brain, liver, pancreas and adipose tissue (at protein level). Widely expressed.

Functionally, substrate-recognition component of the SCF (SKP1-CUL1-F-box protein)-type E3 ubiquitin ligase complex. The protein is F-box only protein 44 (Fbxo44) of Mus musculus (Mouse).